The sequence spans 624 residues: Carbon monoxide dehydrogenase (624 aa).

5 residues coordinate [4Fe-4S] cluster: Cys-37, Cys-46, Cys-49, Cys-54, and Cys-65. The [Ni-4Fe-5S] cluster site is built by His-256, Cys-292, Cys-336, Cys-444, Cys-475, and Cys-516.

The protein belongs to the Ni-containing carbon monoxide dehydrogenase family. As to quaternary structure, homodimer. The cofactor is [4Fe-4S] cluster. [Ni-4Fe-5S] cluster is required as a cofactor.

The catalysed reaction is CO + 2 oxidized [2Fe-2S]-[ferredoxin] + H2O = 2 reduced [2Fe-2S]-[ferredoxin] + CO2 + 2 H(+). Its function is as follows. CODH oxidizes carbon monoxide coupled, via CooF, to the reduction of a hydrogen cation by a hydrogenase (possibly CooH). This Methanocaldococcus jannaschii (strain ATCC 43067 / DSM 2661 / JAL-1 / JCM 10045 / NBRC 100440) (Methanococcus jannaschii) protein is Carbon monoxide dehydrogenase (cooS).